The following is a 129-amino-acid chain: Glycine cleavage system H protein (129 aa).

The Lipoyl-binding domain maps to Ser24–Met106. The residue at position 65 (Lys65) is an N6-lipoyllysine.

The protein belongs to the GcvH family. The glycine cleavage system is composed of four proteins: P, T, L and H. Requires (R)-lipoate as cofactor.

The glycine cleavage system catalyzes the degradation of glycine. The H protein shuttles the methylamine group of glycine from the P protein to the T protein. The sequence is that of Glycine cleavage system H protein from Shewanella loihica (strain ATCC BAA-1088 / PV-4).